Reading from the N-terminus, the 220-residue chain is Ribosomal RNA large subunit methyltransferase E (220 aa).

S-adenosyl-L-methionine contacts are provided by G60, W62, D92, D108, and D133. The active-site Proton acceptor is the K173. The disordered stretch occupies residues 198–220; that stretch reads KPKASRDKSSETFILGRQLKHPR.

It belongs to the class I-like SAM-binding methyltransferase superfamily. RNA methyltransferase RlmE family.

It localises to the cytoplasm. The enzyme catalyses uridine(2552) in 23S rRNA + S-adenosyl-L-methionine = 2'-O-methyluridine(2552) in 23S rRNA + S-adenosyl-L-homocysteine + H(+). Its function is as follows. Specifically methylates the uridine in position 2552 of 23S rRNA at the 2'-O position of the ribose in the fully assembled 50S ribosomal subunit. The chain is Ribosomal RNA large subunit methyltransferase E from Burkholderia cenocepacia (strain HI2424).